The chain runs to 116 residues: Protein Rev (116 aa).

Serine 5 and serine 8 each carry phosphoserine; by host CK2. A homomultimerization region spans residues 18 to 26; the sequence is LIKILYQSN. The segment at 26–50 is disordered; that stretch reads NPYPKPNGSRQARRNRRRRWRARQN. Positions 34–50 match the Nuclear localization signal and RNA-binding (RRE) motif; it reads SRQARRNRRRRWRARQN. A compositionally biased stretch (basic residues) spans 36–47; that stretch reads QARRNRRRRWRA. The Nuclear export signal and binding to XPO1 motif lies at 73–84; sequence LQLPPIERLRLD. Residues 91–116 form a disordered region; that stretch reads NSGTQGVGDPQISGEPCMVLGAGTKE. Serine 92 is subject to Phosphoserine; by host.

Belongs to the HIV-1 REV protein family. In terms of assembly, homomultimer; when bound to the RRE. Multimeric assembly is essential for activity and may involve XPO1. Binds to human KPNB1, XPO1, TNPO1, RANBP5 and IPO7. Interacts with the viral Integrase. Interacts with human KHDRBS1. Interacts with human NAP1; this interaction decreases Rev multimerization and stimulates its activity. Interacts with human DEAD-box helicases DDX3 and DDX24; these interactions may serve for viral RNA export to the cytoplasm and packaging, respectively. Interacts with human PSIP1; this interaction may inhibit HIV-1 DNA integration by promoting dissociation of the Integrase-LEDGF/p75 complex. Post-translationally, asymmetrically arginine dimethylated at one site by host PRMT6. Methylation impairs the RNA-binding activity and export of viral RNA from the nucleus to the cytoplasm. In terms of processing, phosphorylated by protein kinase CK2. Presence of, and maybe binding to the N-terminus of the regulatory beta subunit of CK2 is necessary for CK2-mediated Rev's phosphorylation.

The protein resides in the host nucleus. Its subcellular location is the host nucleolus. It is found in the host cytoplasm. Functionally, escorts unspliced or incompletely spliced viral pre-mRNAs (late transcripts) out of the nucleus of infected cells. These pre-mRNAs carry a recognition sequence called Rev responsive element (RRE) located in the env gene, that is not present in fully spliced viral mRNAs (early transcripts). This function is essential since most viral proteins are translated from unspliced or partially spliced pre-mRNAs which cannot exit the nucleus by the pathway used by fully processed cellular mRNAs. Rev itself is translated from a fully spliced mRNA that readily exits the nucleus. Rev's nuclear localization signal (NLS) binds directly to KPNB1/Importin beta-1 without previous binding to KPNA1/Importin alpha-1. KPNB1 binds to the GDP bound form of RAN (Ran-GDP) and targets Rev to the nucleus. In the nucleus, the conversion from Ran-GDP to Ran-GTP dissociates Rev from KPNB1 and allows Rev's binding to the RRE in viral pre-mRNAs. Rev multimerization on the RRE via cooperative assembly exposes its nuclear export signal (NES) to the surface. Rev can then form a complex with XPO1/CRM1 and Ran-GTP, leading to nuclear export of the complex. Conversion from Ran-GTP to Ran-GDP mediates dissociation of the Rev/RRE/XPO1/RAN complex, so that Rev can return to the nucleus for a subsequent round of export. Beside KPNB1, also seems to interact with TNPO1/Transportin-1, RANBP5/IPO5 and IPO7/RANBP7 for nuclear import. The nucleoporin-like HRB/RIP is an essential cofactor that probably indirectly interacts with Rev to release HIV RNAs from the perinuclear region to the cytoplasm. This chain is Protein Rev, found in Homo sapiens (Human).